Here is a 230-residue protein sequence, read N- to C-terminus: Probable GTP-binding protein EngB (230 aa).

In terms of domain architecture, EngB-type G spans glutamate 36–isoleucine 224. GTP-binding positions include glycine 44–serine 51, glycine 69–lysine 73, aspartate 86–glycine 89, asparagine 166–aspartate 169, and valine 201–alanine 203. Residues serine 51 and threonine 71 each coordinate Mg(2+).

The protein belongs to the TRAFAC class TrmE-Era-EngA-EngB-Septin-like GTPase superfamily. EngB GTPase family. Mg(2+) is required as a cofactor.

In terms of biological role, necessary for normal cell division and for the maintenance of normal septation. This chain is Probable GTP-binding protein EngB, found in Methanococcus maripaludis (strain DSM 14266 / JCM 13030 / NBRC 101832 / S2 / LL).